A 627-amino-acid chain; its full sequence is Coiled-coil domain-containing protein 22 (627 aa).

Residues 1-321 (MEEADRILIH…VSDVPATSRR (321 aa)) form a sufficient for interaction with COMMD1 region. A sufficicient and required for interaction with CCDC93 region spans residues 1 to 447 (MEEADRILIH…LQDCRELESS (447 aa)). The segment at 218-243 (TGRDRPGDEDWVHRTSRLPPQEDTRA) is disordered. Positions 219–230 (GRDRPGDEDWVH) are enriched in basic and acidic residues. Residues 320–627 (RRPEQVTWAA…AGLLGRVREA (308 aa)) are a coiled coil. A Phosphoserine modification is found at Ser-410.

This sequence belongs to the CCDC22 family. As to quaternary structure, component of the commander complex consisting of the CCC subcomplex and the retriever subcomplex. Component of the CCC (COMMD/CCDC22/CCDC93) subcomplex consisting of COMMD1, COMMD2, COMMD3, COMMD4, COMMD5, COMMD6, COMMD7, COMMD8, COMMD9, COMMD10, CCDC22 and CCDC93. Forms a coiled-coil heterodimer with CCDC22; this heterodimer interacts with the guanine nucleotide exchange factor DENND10; the interaction is direct. Interacts with CUL1, CUL2, CUL3, SKP1, BTRC. Interacts with SNX17 and SNX31. Interacts with CPNE1 and CPNE4. Widely expressed in adult tissues and in fetal liver and brain, with highest levels in prostate and lowest in skeletal muscle.

It localises to the endosome. The protein localises to the cytoplasm. The protein resides in the cytoskeleton. Its subcellular location is the microtubule organizing center. It is found in the centrosome. Functionally, component of the commander complex that is essential for endosomal recycling of transmembrane cargos; the Commander complex is composed of composed of the CCC subcomplex and the retriever subcomplex. Component of the CCC complex, which is involved in the regulation of endosomal recycling of surface proteins, including integrins, signaling receptor and channels. Involved in regulation of NF-kappa-B signaling. Promotes ubiquitination of I-kappa-B-kinase subunit IKBKB and its subsequent proteasomal degradation leading to NF-kappa-B activation; the function may involve association with COMMD8 and a CUL1-dependent E3 ubiquitin ligase complex. May down-regulate NF-kappa-B activity via association with COMMD1 and involving a CUL2-dependent E3 ubiquitin ligase complex. Regulates the cellular localization of COMM domain-containing proteins, such as COMMD1 and COMMD10. Component of the CCC complex, which is involved in the regulation of endosomal recycling of surface proteins, including integrins, signaling receptor and channels. The CCC complex associates with SNX17, retriever and WASH complexes to prevent lysosomal degradation and promote cell surface recycling of numerous cargos such as integrins ITGA5:ITGB1. Plays a role in copper ion homeostasis. Involved in copper-dependent ATP7A trafficking between the trans-Golgi network and vesicles in the cell periphery; the function is proposed to depend on its association within the CCC complex and cooperation with the WASH complex on early endosomes. Its function is as follows. (Microbial infection) The CCC complex, in collaboration with the heterotrimeric retriever complex, mediates the exit of human papillomavirus to the cell surface. The chain is Coiled-coil domain-containing protein 22 (CCDC22) from Homo sapiens (Human).